Reading from the N-terminus, the 425-residue chain is Tyrosine--tRNA ligase (425 aa).

Tyr-37 contacts L-tyrosine. Positions 42–51 (PTADSLHLGH) match the 'HIGH' region motif. 2 residues coordinate L-tyrosine: Tyr-175 and Gln-179. Positions 235-239 (KFGKT) match the 'KMSKS' region motif. Lys-238 lines the ATP pocket. The S4 RNA-binding domain maps to 357 to 414 (ADLQQALVSAELVPSRGQARTMISSNAVTINGEKQANPEYIFSASDRLFDRYTLLRRG).

It belongs to the class-I aminoacyl-tRNA synthetase family. TyrS type 1 subfamily. Homodimer.

The protein localises to the cytoplasm. It catalyses the reaction tRNA(Tyr) + L-tyrosine + ATP = L-tyrosyl-tRNA(Tyr) + AMP + diphosphate + H(+). Its function is as follows. Catalyzes the attachment of tyrosine to tRNA(Tyr) in a two-step reaction: tyrosine is first activated by ATP to form Tyr-AMP and then transferred to the acceptor end of tRNA(Tyr). This is Tyrosine--tRNA ligase from Pectobacterium atrosepticum (strain SCRI 1043 / ATCC BAA-672) (Erwinia carotovora subsp. atroseptica).